The sequence spans 447 residues: Glutamine synthetase (447 aa).

The GS beta-grasp domain occupies 20–105 (RDVKFIRTQF…ILGDVYLPDG (86 aa)). Residues 112–447 (PRYVLKTAIK…WELSRYLSML (336 aa)) form the GS catalytic domain. Residues E135 and E137 each coordinate Mg(2+). Residue E187 coordinates ATP. Mg(2+) is bound by residues E192 and E199. L-glutamate-binding positions include 243 to 244 (NG) and G244. Mg(2+) is bound at residue H248. S252 is a binding site for ATP. Positions 301, 307, and 319 each coordinate L-glutamate. R319 and R324 together coordinate ATP. Mg(2+) is bound at residue E336. R338 is an L-glutamate binding site.

Belongs to the glutamine synthetase family. In terms of assembly, homohexamer. Interacts and forms stable complexes with the regulatory protein GlnK1. Requires Mg(2+) as cofactor.

Its subcellular location is the cytoplasm. It carries out the reaction L-glutamate + NH4(+) + ATP = L-glutamine + ADP + phosphate + H(+). With respect to regulation, directly stimulated by the effector molecule 2-oxoglutarate. Inhibited by GlnK1. 2-oxoglutarate antagonizes the inhibitory effects of GlnK1, but does not prevent GlnK1/GlnA1 complex formation. Probably involved in nitrogen metabolism via ammonium assimilation. Catalyzes the ATP-dependent biosynthesis of glutamine from glutamate and ammonia. This chain is Glutamine synthetase, found in Methanosarcina mazei (strain ATCC BAA-159 / DSM 3647 / Goe1 / Go1 / JCM 11833 / OCM 88) (Methanosarcina frisia).